We begin with the raw amino-acid sequence, 603 residues long: Elongation factor 4 (603 aa).

Residues 7–189 (SRLRNFCIIA…AVVDRIPSPK (183 aa)) form the tr-type G domain. GTP-binding positions include 19–24 (DHGKST) and 136–139 (NKVD).

The protein belongs to the TRAFAC class translation factor GTPase superfamily. Classic translation factor GTPase family. LepA subfamily.

Its subcellular location is the cell inner membrane. It carries out the reaction GTP + H2O = GDP + phosphate + H(+). Required for accurate and efficient protein synthesis under certain stress conditions. May act as a fidelity factor of the translation reaction, by catalyzing a one-codon backward translocation of tRNAs on improperly translocated ribosomes. Back-translocation proceeds from a post-translocation (POST) complex to a pre-translocation (PRE) complex, thus giving elongation factor G a second chance to translocate the tRNAs correctly. Binds to ribosomes in a GTP-dependent manner. This chain is Elongation factor 4, found in Prochlorococcus marinus (strain NATL1A).